The chain runs to 592 residues: Laccase PFICI_06862 (592 aa).

Positions 1–19 are cleaved as a signal peptide; that stretch reads MYIQTQFASLLLLAGTSLA. N26 carries N-linked (GlcNAc...) asparagine glycosylation. Plastocyanin-like domains lie at 32 to 142 and 173 to 350; these read QWSS…WIAP and VVIS…RYPG. Residues H78, H80, H123, and H125 each coordinate Cu cation. 3 N-linked (GlcNAc...) asparagine glycosylation sites follow: N370, N407, and N454. The 119-residue stretch at 445 to 563 folds into the Plastocyanin-like 3 domain; sequence SDVQGGSMQN…AGQQVVLLEG (119 aa). Residue H475 coordinates Cu cation. An N-linked (GlcNAc...) asparagine glycan is attached at N524.

It belongs to the multicopper oxidase family.

The protein localises to the cell surface. It participates in pigment biosynthesis; melanin biosynthesis. In terms of biological role, laccase involved the biosynthesis of dihydroxynaphthalene (DHN)-melanin, a bluish-green pigment forming a dark layer in the conidial wall that protects the conidia from UV radiations. The first step of the pathway is the production of the pentaketide 1,3,6,8-tetrahydroxynaphthalene (1,3,6,8-THN or T4HN) by the polyketide synthase PfmaE though condensation of acetyl-CoA with malonyl-CoA. T4HN is not stable and easily oxidizes into the stable form flaviolin. T4HN is also substrate of the hydroxynaphthalene reductase PfmaG to yield scytalone. The scytalone dehydratase PfmaJ then reduces scytalone to 1,3,8-THN. 1,3,8-THN is then substrate of the hydroxynaphthalene reductase PfmaI to yield vermelone. Vermelone is further converted by the multicopper oxidase PfmaD to 1,8-DHN. Finally the laccase PFICI_06862 transforms 1,8-DHN to DHN-melanin. The roles of the 5-oxoprolinase PfmaA and the proline iminopeptidase PfmaB within the cluster have not been elucidated yet. The protein is Laccase PFICI_06862 of Pestalotiopsis fici (strain W106-1 / CGMCC3.15140).